A 527-amino-acid polypeptide reads, in one-letter code: V(D)J recombination-activating protein 2 (527 aa).

Residues 359–380 (QKIVSNSQTSTEDPGDSTPFED) are disordered. Residues 361-370 (IVSNSQTSTE) are compositionally biased toward polar residues. A compositionally biased stretch (acidic residues) spans 371–380 (DPGDSTPFED). Residues 416-484 (WITCCPTCDV…KYYCNEHVQI (69 aa)) form a PHD-type; atypical zinc finger. Zn(2+) is bound by residues Cys-419, Cys-423, Cys-446, His-452, His-455, Cys-458, Cys-478, and His-481. Positions 490–511 (TPKRNPPLQKPPMKSLHKKGSG) are disordered.

It belongs to the RAG2 family. Component of the RAG complex composed of core components RAG1 and RAG2, and associated component HMGB1 or HMGB2. In terms of tissue distribution, maturing lymphoid cells.

It localises to the nucleus. Core component of the RAG complex, a multiprotein complex that mediates the DNA cleavage phase during V(D)J recombination. V(D)J recombination assembles a diverse repertoire of immunoglobulin and T-cell receptor genes in developing B and T-lymphocytes through rearrangement of different V (variable), in some cases D (diversity), and J (joining) gene segments. DNA cleavage by the RAG complex occurs in 2 steps: a first nick is introduced in the top strand immediately upstream of the heptamer, generating a 3'-hydroxyl group that can attack the phosphodiester bond on the opposite strand in a direct transesterification reaction, thereby creating 4 DNA ends: 2 hairpin coding ends and 2 blunt, 5'-phosphorylated ends. The chromatin structure plays an essential role in the V(D)J recombination reactions and the presence of histone H3 trimethylated at 'Lys-4' (H3K4me3) stimulates both the nicking and haipinning steps. The RAG complex also plays a role in pre-B cell allelic exclusion, a process leading to expression of a single immunoglobulin heavy chain allele to enforce clonality and monospecific recognition by the B-cell antigen receptor (BCR) expressed on individual B-lymphocytes. The introduction of DNA breaks by the RAG complex on one immunoglobulin allele induces ATM-dependent repositioning of the other allele to pericentromeric heterochromatin, preventing accessibility to the RAG complex and recombination of the second allele. In the RAG complex, RAG2 is not the catalytic component but is required for all known catalytic activities mediated by RAG1. It probably acts as a sensor of chromatin state that recruits the RAG complex to H3K4me3. This chain is V(D)J recombination-activating protein 2 (Rag2), found in Mus musculus (Mouse).